The sequence spans 90 residues: MSITSEKKKNLINTYAIKEDDTGSSFVQCAILTERISNLTEHFKVHKHDHHSKRGLLILIGRRRKHLNYIKRKFGDEAYQQLIEKLGIRK.

This sequence belongs to the universal ribosomal protein uS15 family. In terms of assembly, part of the 30S ribosomal subunit. Forms a bridge to the 50S subunit in the 70S ribosome, contacting the 23S rRNA.

Functionally, one of the primary rRNA binding proteins, it binds directly to 16S rRNA where it helps nucleate assembly of the platform of the 30S subunit by binding and bridging several RNA helices of the 16S rRNA. Its function is as follows. Forms an intersubunit bridge (bridge B4) with the 23S rRNA of the 50S subunit in the ribosome. The protein is Small ribosomal subunit protein uS15 of Wolbachia sp. subsp. Brugia malayi (strain TRS).